Consider the following 633-residue polypeptide: DNA-directed RNA polymerase subunit beta' (633 aa).

The Zn(2+) site is built by cysteine 72, cysteine 74, cysteine 87, and cysteine 90. Residues aspartate 468, aspartate 470, and aspartate 472 each contribute to the Mg(2+) site.

Belongs to the RNA polymerase beta' chain family. RpoC1 subfamily. In terms of assembly, in plastids the minimal PEP RNA polymerase catalytic core is composed of four subunits: alpha, beta, beta', and beta''. When a (nuclear-encoded) sigma factor is associated with the core the holoenzyme is formed, which can initiate transcription. It depends on Mg(2+) as a cofactor. Requires Zn(2+) as cofactor.

Its subcellular location is the plastid. It is found in the chloroplast. The enzyme catalyses RNA(n) + a ribonucleoside 5'-triphosphate = RNA(n+1) + diphosphate. In terms of biological role, DNA-dependent RNA polymerase catalyzes the transcription of DNA into RNA using the four ribonucleoside triphosphates as substrates. This Cyanidium caldarium (Red alga) protein is DNA-directed RNA polymerase subunit beta'.